A 302-amino-acid polypeptide reads, in one-letter code: Methionyl-tRNA formyltransferase (302 aa).

108 to 111 (SLLP) is a binding site for (6S)-5,6,7,8-tetrahydrofolate. Over residues 276–288 (REGKRPMEPEEFL) the composition is skewed to basic and acidic residues. The interval 276 to 302 (REGKRPMEPEEFLRGFPLPEGSRAHTA) is disordered.

Belongs to the Fmt family.

It catalyses the reaction L-methionyl-tRNA(fMet) + (6R)-10-formyltetrahydrofolate = N-formyl-L-methionyl-tRNA(fMet) + (6S)-5,6,7,8-tetrahydrofolate + H(+). Functionally, attaches a formyl group to the free amino group of methionyl-tRNA(fMet). The formyl group appears to play a dual role in the initiator identity of N-formylmethionyl-tRNA by promoting its recognition by IF2 and preventing the misappropriation of this tRNA by the elongation apparatus. The sequence is that of Methionyl-tRNA formyltransferase from Cereibacter sphaeroides (strain ATCC 17029 / ATH 2.4.9) (Rhodobacter sphaeroides).